Here is a 462-residue protein sequence, read N- to C-terminus: ATP synthase subunit beta (462 aa).

151 to 158 (GGAGVGKT) serves as a coordination point for ATP.

Belongs to the ATPase alpha/beta chains family. As to quaternary structure, F-type ATPases have 2 components, CF(1) - the catalytic core - and CF(0) - the membrane proton channel. CF(1) has five subunits: alpha(3), beta(3), gamma(1), delta(1), epsilon(1). CF(0) has three main subunits: a(1), b(2) and c(9-12). The alpha and beta chains form an alternating ring which encloses part of the gamma chain. CF(1) is attached to CF(0) by a central stalk formed by the gamma and epsilon chains, while a peripheral stalk is formed by the delta and b chains.

Its subcellular location is the cell inner membrane. The catalysed reaction is ATP + H2O + 4 H(+)(in) = ADP + phosphate + 5 H(+)(out). Its function is as follows. Produces ATP from ADP in the presence of a proton gradient across the membrane. The catalytic sites are hosted primarily by the beta subunits. The sequence is that of ATP synthase subunit beta from Chlorobaculum parvum (strain DSM 263 / NCIMB 8327) (Chlorobium vibrioforme subsp. thiosulfatophilum).